A 387-amino-acid chain; its full sequence is uncharacterized protein (387 aa).

Disordered regions lie at residues 1-126 (MDGR…GDDE), 138-169 (GNQGGLVPGLAPIPSENENGKNDIEKNNRNEE), and 275-298 (SSIFSDSQAVTTDDEGISSTAGNK). Residues 32-45 (SSDHRTSNSAESKK) show a composition bias toward basic and acidic residues. 2 stretches are compositionally biased toward polar residues: residues 49–63 (SGKSISDLGISNNDN) and 78–93 (DLSSRSTETSDNSKGT). Residues 155 to 169 (ENGKNDIEKNNRNEE) show a composition bias toward basic and acidic residues. A compositionally biased stretch (polar residues) spans 275-296 (SSIFSDSQAVTTDDEGISSTAG).

Belongs to the ThrE exporter (TC 2.A.79) family.

This is an uncharacterized protein from Saccharomyces cerevisiae (strain ATCC 204508 / S288c) (Baker's yeast).